A 750-amino-acid chain; its full sequence is Photosystem I P700 chlorophyll a apoprotein A1 (750 aa).

8 helical membrane passes run 72–95 (VFSAHFGQLAVIFIWLSGMYFHGA), 158–181 (LYTTAIGGLIAAGLMFFAGWFHYH), 197–221 (MNHHLAGLLGLGSLSWAGHQIHVSL), 293–311 (TVHHHVAIAVLFIVAGHMY), 348–371 (WHAQLGLNLALMGSLSIIVAHHMY), 387–413 (LSLFTHHMWIGGFCIVGGAAHAAIFMV), 435–457 (AIISHLNWVCIFLGFHSFGLYIH), and 532–550 (FLVHHIHAFTIHVTVLILL). [4Fe-4S] cluster contacts are provided by cysteine 574 and cysteine 583. 2 helical membrane passes run 590 to 611 (HVFLGLFWMYNCLSIVIFHFSW) and 664 to 686 (LSAYGLMFLGAHFVWAFSLMFLF). Position 675 (histidine 675) interacts with chlorophyll a'. The chlorophyll a site is built by methionine 683 and tyrosine 691. Residue tryptophan 692 coordinates phylloquinone. The chain crosses the membrane as a helical span at residues 724–744 (AVGVAHYLLGGIATTWAFFLA).

This sequence belongs to the PsaA/PsaB family. In terms of assembly, the PsaA/B heterodimer binds the P700 chlorophyll special pair and subsequent electron acceptors. PSI consists of a core antenna complex that captures photons, and an electron transfer chain that converts photonic excitation into a charge separation. The eukaryotic PSI reaction center is composed of at least 11 subunits. Requires P700 is a chlorophyll a/chlorophyll a' dimer, A0 is one or more chlorophyll a, A1 is one or both phylloquinones and FX is a shared 4Fe-4S iron-sulfur center. as cofactor.

Its subcellular location is the plastid. It is found in the chloroplast thylakoid membrane. The catalysed reaction is reduced [plastocyanin] + hnu + oxidized [2Fe-2S]-[ferredoxin] = oxidized [plastocyanin] + reduced [2Fe-2S]-[ferredoxin]. Its function is as follows. PsaA and PsaB bind P700, the primary electron donor of photosystem I (PSI), as well as the electron acceptors A0, A1 and FX. PSI is a plastocyanin-ferredoxin oxidoreductase, converting photonic excitation into a charge separation, which transfers an electron from the donor P700 chlorophyll pair to the spectroscopically characterized acceptors A0, A1, FX, FA and FB in turn. Oxidized P700 is reduced on the lumenal side of the thylakoid membrane by plastocyanin. The protein is Photosystem I P700 chlorophyll a apoprotein A1 of Mesostigma viride (Green alga).